The primary structure comprises 417 residues: Serpin H1 (417 aa).

An N-terminal signal peptide occupies residues 1–18 (MRSLLLLSAFCLLEAALA). Lys94 carries the post-translational modification N6-succinyllysine. 2 N-linked (GlcNAc...) asparagine glycosylation sites follow: Asn120 and Asn125. At Ser141 the chain carries Phosphoserine. Residue Lys206 is modified to N6-acetyllysine. An N6-succinyllysine modification is found at Lys295. At Lys318 the chain carries N6-acetyllysine. Residues 414 to 417 (RDEL) carry the Prevents secretion from ER motif.

The protein belongs to the serpin family.

It localises to the endoplasmic reticulum lumen. Its function is as follows. Binds specifically to collagen. Could be involved as a chaperone in the biosynthetic pathway of collagen. This Pongo abelii (Sumatran orangutan) protein is Serpin H1 (SERPINH1).